Reading from the N-terminus, the 506-residue chain is ATP synthase subunit alpha, chloroplastic (506 aa).

170-177 (GDRQTGKT) contacts ATP.

This sequence belongs to the ATPase alpha/beta chains family. As to quaternary structure, F-type ATPases have 2 components, CF(1) - the catalytic core - and CF(0) - the membrane proton channel. CF(1) has five subunits: alpha(3), beta(3), gamma(1), delta(1), epsilon(1). CF(0) has four main subunits: a, b, b' and c.

The protein resides in the plastid. Its subcellular location is the chloroplast thylakoid membrane. It catalyses the reaction ATP + H2O + 4 H(+)(in) = ADP + phosphate + 5 H(+)(out). Its function is as follows. Produces ATP from ADP in the presence of a proton gradient across the membrane. The alpha chain is a regulatory subunit. The polypeptide is ATP synthase subunit alpha, chloroplastic (Chlorella vulgaris (Green alga)).